Consider the following 1074-residue polypeptide: Formin-G (1074 aa).

The GBD/FH3 domain maps to 34 to 423 (LQMQQGSKTY…DKINEFEKKI (390 aa)). Disordered stretches follow at residues 476-507 (QSIS…DIQS) and 549-639 (FTPT…NPSS). Positions 481 to 503 (SQDSSNNQKASSSSSNTSTLNDS) are enriched in low complexity. The stretch at 502–530 (DSDIQSIQSSLKEATLEIERLKLAIEEKM) forms a coiled coil. Polar residues predominate over residues 549-561 (FTPTSPDISNDGQ). Positions 568 to 610 (APPPSPSPPPPISGGGAPPPPPPPPPPPSGGGAPPPPPPPPPS) are enriched in pro residues. The region spanning 597–623 (GGGAPPPPPPPPPSGGKKAGAPGAPPT) is the FH1 domain. The region spanning 631 to 1031 (NKPVINPSSK…ASGDNGAVQN (401 aa)) is the FH2 domain. Residues 914–971 (DINDLEKQFNISKNNCKKVLEANIPSSSKFQSTIGSFLEKTEIDIKNLKENQKNIVDS) adopt a coiled-coil conformation. Residues 1037-1073 (GADPLAALANAIKLGQTGLRKRPGPENSSGGSQLNLN) enclose the DAD domain. The disordered stretch occupies residues 1053 to 1074 (TGLRKRPGPENSSGGSQLNLNK). Over residues 1062 to 1074 (ENSSGGSQLNLNK) the composition is skewed to polar residues.

The protein belongs to the formin homology family. Diaphanous subfamily. As to quaternary structure, interacts (via GBD/FH3 domain) with activated Rho-GTPases.

In terms of biological role, formins play an important role in the nucleation of actin and the formation of linear actin filaments. This Dictyostelium discoideum (Social amoeba) protein is Formin-G (forG).